Consider the following 37-residue polypeptide: Large ribosomal subunit protein bL36B (37 aa).

This sequence belongs to the bacterial ribosomal protein bL36 family.

This Paenarthrobacter aurescens (strain TC1) protein is Large ribosomal subunit protein bL36B.